Here is a 153-residue protein sequence, read N- to C-terminus: Regulatory protein RecX (153 aa).

The protein belongs to the RecX family.

The protein localises to the cytoplasm. Its function is as follows. Modulates RecA activity. The protein is Regulatory protein RecX of Neisseria meningitidis serogroup C / serotype 2a (strain ATCC 700532 / DSM 15464 / FAM18).